The primary structure comprises 407 residues: Argininosuccinate synthase (407 aa).

ATP contacts are provided by residues 16–24 (AYSGGLDTS) and Ala-44. L-citrulline is bound by residues Tyr-96 and Ser-101. Gly-126 is an ATP binding site. Thr-128, Asn-132, and Asp-133 together coordinate L-aspartate. Asn-132 contributes to the L-citrulline binding site. Residues Arg-136, Ser-185, Ser-194, Glu-270, and Tyr-282 each coordinate L-citrulline.

This sequence belongs to the argininosuccinate synthase family. Type 1 subfamily. Homotetramer.

It localises to the cytoplasm. The enzyme catalyses L-citrulline + L-aspartate + ATP = 2-(N(omega)-L-arginino)succinate + AMP + diphosphate + H(+). Its pathway is amino-acid biosynthesis; L-arginine biosynthesis; L-arginine from L-ornithine and carbamoyl phosphate: step 2/3. This Shewanella sp. (strain W3-18-1) protein is Argininosuccinate synthase.